The chain runs to 317 residues: Fruit protein pKIWI502 (317 aa).

Positions 1–29 (MSITLSRPSLSRPSLSRHPSLTLHSSLSH) are disordered. Positions 71-182 (YIWTPVPISR…TQIIGRGFDI (112 aa)) constitute an FAD-binding FR-type domain.

This Actinidia deliciosa (Kiwi) protein is Fruit protein pKIWI502.